The chain runs to 281 residues: Diaminopimelate epimerase (281 aa).

2 residues coordinate substrate: N13 and N66. C75 (proton donor) is an active-site residue. Residues 76–77 (GN), N164, N197, and 215–216 (ER) contribute to the substrate site. C224 acts as the Proton acceptor in catalysis. Residue 225 to 226 (GT) participates in substrate binding.

This sequence belongs to the diaminopimelate epimerase family. In terms of assembly, homodimer.

It localises to the cytoplasm. It carries out the reaction (2S,6S)-2,6-diaminopimelate = meso-2,6-diaminopimelate. It participates in amino-acid biosynthesis; L-lysine biosynthesis via DAP pathway; DL-2,6-diaminopimelate from LL-2,6-diaminopimelate: step 1/1. Its function is as follows. Catalyzes the stereoinversion of LL-2,6-diaminopimelate (L,L-DAP) to meso-diaminopimelate (meso-DAP), a precursor of L-lysine and an essential component of the bacterial peptidoglycan. The sequence is that of Diaminopimelate epimerase from Microcystis aeruginosa (strain NIES-843 / IAM M-2473).